Consider the following 311-residue polypeptide: Meteorin-like protein (311 aa).

A signal peptide spans 1 to 45 (MRGAVWAARRRAGQQWPRSPGPGPGPPPPPPLLLLLLLLLGGASA). Cys-52 and Cys-75 are joined by a disulfide. A glycan (N-linked (GlcNAc...) asparagine) is linked at Asn-103. 4 cysteine pairs are disulfide-bonded: Cys-107–Cys-143, Cys-188–Cys-260, Cys-191–Cys-284, and Cys-201–Cys-306.

This sequence belongs to the meteorin family. N-glycosylated. In terms of tissue distribution, highly expressed in subcutaneous adipose tissue.

The protein localises to the secreted. Functionally, hormone induced following exercise or cold exposure that promotes energy expenditure. Induced either in the skeletal muscle after exercise or in adipose tissue following cold exposure and is present in the circulation. Able to stimulate energy expenditure associated with the browning of the white fat depots and improves glucose tolerance. Does not promote an increase in a thermogenic gene program via direct action on adipocytes, but acts by stimulating several immune cell subtypes to enter the adipose tissue and activate their prothermogenic actions. Stimulates an eosinophil-dependent increase in IL4 expression and promotes alternative activation of adipose tissue macrophages, which are required for the increased expression of the thermogenic and anti-inflammatory gene programs in fat. Required for some cold-induced thermogenic responses, suggesting a role in metabolic adaptations to cold temperatures. This Mus musculus (Mouse) protein is Meteorin-like protein (Metrnl).